We begin with the raw amino-acid sequence, 949 residues long: Bifunctional uridylyltransferase/uridylyl-removing enzyme (949 aa).

The segment at 1–377 (MARHETSFPE…RFRNRVRKIA (377 aa)) is uridylyltransferase. The uridylyl-removing stretch occupies residues 378–733 (GTLDFVDDGG…VRTHDFHAIT (356 aa)). The region spanning 494-610 (VDEHLLRSVD…VDFAERVQSL (117 aa)) is the HD domain. ACT domains follow at residues 734–816 (EITV…VIAS) and 845–926 (VIEV…ERMP). Residues 926-949 (PSGIIAPTPVSRVPHGSKTTKAET) form a disordered region.

This sequence belongs to the GlnD family. The cofactor is Mg(2+).

It catalyses the reaction [protein-PII]-L-tyrosine + UTP = [protein-PII]-uridylyl-L-tyrosine + diphosphate. The catalysed reaction is [protein-PII]-uridylyl-L-tyrosine + H2O = [protein-PII]-L-tyrosine + UMP + H(+). With respect to regulation, uridylyltransferase (UTase) activity is inhibited by glutamine, while glutamine activates uridylyl-removing (UR) activity. In terms of biological role, modifies, by uridylylation and deuridylylation, the PII regulatory proteins (GlnB and homologs), in response to the nitrogen status of the cell that GlnD senses through the glutamine level. Under low glutamine levels, catalyzes the conversion of the PII proteins and UTP to PII-UMP and PPi, while under higher glutamine levels, GlnD hydrolyzes PII-UMP to PII and UMP (deuridylylation). Thus, controls uridylylation state and activity of the PII proteins, and plays an important role in the regulation of nitrogen fixation and metabolism. This chain is Bifunctional uridylyltransferase/uridylyl-removing enzyme, found in Rhizobium meliloti (strain 1021) (Ensifer meliloti).